Reading from the N-terminus, the 177-residue chain is Large ribosomal subunit protein uL6 (177 aa).

The protein belongs to the universal ribosomal protein uL6 family. In terms of assembly, part of the 50S ribosomal subunit.

In terms of biological role, this protein binds to the 23S rRNA, and is important in its secondary structure. It is located near the subunit interface in the base of the L7/L12 stalk, and near the tRNA binding site of the peptidyltransferase center. In Citrobacter koseri (strain ATCC BAA-895 / CDC 4225-83 / SGSC4696), this protein is Large ribosomal subunit protein uL6.